We begin with the raw amino-acid sequence, 277 residues long: Thymidylate synthase (277 aa).

Residues R27 and 132 to 133 (RR) contribute to the dUMP site. Residue C152 is the Nucleophile of the active site. Residues 179 to 182 (RSAD), N190, and 220 to 222 (HVY) contribute to the dUMP site. A (6R)-5,10-methylene-5,6,7,8-tetrahydrofolate-binding site is contributed by D182. A276 is a (6R)-5,10-methylene-5,6,7,8-tetrahydrofolate binding site.

The protein belongs to the thymidylate synthase family. Bacterial-type ThyA subfamily. As to quaternary structure, homodimer.

The protein resides in the cytoplasm. The enzyme catalyses dUMP + (6R)-5,10-methylene-5,6,7,8-tetrahydrofolate = 7,8-dihydrofolate + dTMP. The protein operates within pyrimidine metabolism; dTTP biosynthesis. In terms of biological role, catalyzes the reductive methylation of 2'-deoxyuridine-5'-monophosphate (dUMP) to 2'-deoxythymidine-5'-monophosphate (dTMP) while utilizing 5,10-methylenetetrahydrofolate (mTHF) as the methyl donor and reductant in the reaction, yielding dihydrofolate (DHF) as a by-product. This enzymatic reaction provides an intracellular de novo source of dTMP, an essential precursor for DNA biosynthesis. This is Thymidylate synthase from Albidiferax ferrireducens (strain ATCC BAA-621 / DSM 15236 / T118) (Rhodoferax ferrireducens).